We begin with the raw amino-acid sequence, 206 residues long: Thymidylate kinase (206 aa).

ATP is bound at residue 14–21; that stretch reads GGEGIGKS.

This sequence belongs to the thymidylate kinase family.

The enzyme catalyses dTMP + ATP = dTDP + ADP. In terms of biological role, phosphorylation of dTMP to form dTDP in both de novo and salvage pathways of dTTP synthesis. This is Thymidylate kinase from Rickettsia bellii (strain RML369-C).